The chain runs to 255 residues: tRNA uridine(34) hydroxylase (255 aa).

A Rhodanese domain is found at 125 to 219 (AAPDTLLIDT…YLEGIPESES (95 aa)). Catalysis depends on C179, which acts as the Cysteine persulfide intermediate.

It belongs to the TrhO family.

It catalyses the reaction uridine(34) in tRNA + AH2 + O2 = 5-hydroxyuridine(34) in tRNA + A + H2O. Catalyzes oxygen-dependent 5-hydroxyuridine (ho5U) modification at position 34 in tRNAs. The chain is tRNA uridine(34) hydroxylase from Nitrobacter hamburgensis (strain DSM 10229 / NCIMB 13809 / X14).